Consider the following 257-residue polypeptide: 14-3-3-like protein GF14-G (257 aa).

This sequence belongs to the 14-3-3 family.

Functionally, is associated with a DNA binding complex that binds to the G box, a well-characterized cis-acting DNA regulatory element found in plant genes. This Oryza sativa subsp. japonica (Rice) protein is 14-3-3-like protein GF14-G (GF14G).